The sequence spans 139 residues: Putative nickel-responsive regulator (139 aa).

Ni(2+)-binding residues include histidine 79, histidine 90, histidine 92, and cysteine 98.

The protein belongs to the transcriptional regulatory CopG/NikR family. Ni(2+) serves as cofactor.

In terms of biological role, transcriptional regulator. The protein is Putative nickel-responsive regulator of Anaeromyxobacter sp. (strain K).